A 189-amino-acid chain; its full sequence is Inner membrane-spanning protein YciB (189 aa).

A run of 5 helical transmembrane segments spans residues 4 to 24, 53 to 73, 76 to 96, 121 to 141, and 149 to 169; these read FFEF…DIYI, ITFG…DDVF, WKVT…QFFY, MAWA…AFSL, and FKVF…GLYI.

The protein belongs to the YciB family.

It is found in the cell inner membrane. In terms of biological role, plays a role in cell envelope biogenesis, maintenance of cell envelope integrity and membrane homeostasis. This Psychromonas ingrahamii (strain DSM 17664 / CCUG 51855 / 37) protein is Inner membrane-spanning protein YciB.